We begin with the raw amino-acid sequence, 309 residues long: Homoserine O-succinyltransferase (309 aa).

Catalysis depends on cysteine 142, which acts as the Acyl-thioester intermediate. Residues lysine 163 and serine 192 each coordinate substrate. Histidine 235 acts as the Proton acceptor in catalysis. Glutamate 237 is an active-site residue. Arginine 249 lines the substrate pocket.

Belongs to the MetA family. As to quaternary structure, homodimer.

It is found in the cytoplasm. The catalysed reaction is L-homoserine + succinyl-CoA = O-succinyl-L-homoserine + CoA. The protein operates within amino-acid biosynthesis; L-methionine biosynthesis via de novo pathway; O-succinyl-L-homoserine from L-homoserine: step 1/1. Transfers a succinyl group from succinyl-CoA to L-homoserine, forming succinyl-L-homoserine. This chain is Homoserine O-succinyltransferase, found in Escherichia coli O127:H6 (strain E2348/69 / EPEC).